We begin with the raw amino-acid sequence, 262 residues long: NADPH-dependent 7-cyano-7-deazaguanine reductase (262 aa).

Residue 69-71 (IES) participates in substrate binding. Residue 71 to 72 (SK) coordinates NADPH. Cys-170 acts as the Thioimide intermediate in catalysis. The active-site Proton donor is the Asp-177. 209-210 (HE) lines the substrate pocket. 238-239 (RG) contacts NADPH.

The protein belongs to the GTP cyclohydrolase I family. QueF type 2 subfamily. In terms of assembly, homodimer.

It is found in the cytoplasm. The catalysed reaction is 7-aminomethyl-7-carbaguanine + 2 NADP(+) = 7-cyano-7-deazaguanine + 2 NADPH + 3 H(+). The protein operates within tRNA modification; tRNA-queuosine biosynthesis. Catalyzes the NADPH-dependent reduction of 7-cyano-7-deazaguanine (preQ0) to 7-aminomethyl-7-deazaguanine (preQ1). The sequence is that of NADPH-dependent 7-cyano-7-deazaguanine reductase from Buchnera aphidicola subsp. Schizaphis graminum (strain Sg).